A 114-amino-acid polypeptide reads, in one-letter code: Large ribosomal subunit protein uL18 (114 aa).

The protein belongs to the universal ribosomal protein uL18 family. As to quaternary structure, part of the 50S ribosomal subunit; part of the 5S rRNA/L5/L18/L25 subcomplex. Contacts the 5S and 23S rRNAs.

This is one of the proteins that bind and probably mediate the attachment of the 5S RNA into the large ribosomal subunit, where it forms part of the central protuberance. The polypeptide is Large ribosomal subunit protein uL18 (Porphyromonas gingivalis (strain ATCC 33277 / DSM 20709 / CIP 103683 / JCM 12257 / NCTC 11834 / 2561)).